Here is a 431-residue protein sequence, read N- to C-terminus: Trigger factor (431 aa).

Residues 164-249 form the PPIase FKBP-type domain; sequence GDIAVIDFKG…IKEIKRKELP (86 aa).

Belongs to the FKBP-type PPIase family. Tig subfamily.

The protein resides in the cytoplasm. It catalyses the reaction [protein]-peptidylproline (omega=180) = [protein]-peptidylproline (omega=0). In terms of biological role, involved in protein export. Acts as a chaperone by maintaining the newly synthesized protein in an open conformation. Functions as a peptidyl-prolyl cis-trans isomerase. The sequence is that of Trigger factor from Clostridium acetobutylicum (strain ATCC 824 / DSM 792 / JCM 1419 / IAM 19013 / LMG 5710 / NBRC 13948 / NRRL B-527 / VKM B-1787 / 2291 / W).